Reading from the N-terminus, the 319-residue chain is Phosphoenolpyruvate transferase (319 aa).

D50 provides a ligand contact to 7,8-didemethyl-8-hydroxy-5-deazariboflavin.

The protein belongs to the CofD family. As to quaternary structure, homodimer. Mg(2+) is required as a cofactor.

It catalyses the reaction enolpyruvoyl-2-diphospho-5'-guanosine + 7,8-didemethyl-8-hydroxy-5-deazariboflavin = dehydro coenzyme F420-0 + GMP + H(+). It participates in cofactor biosynthesis; coenzyme F420 biosynthesis. Its function is as follows. Catalyzes the transfer of the phosphoenolpyruvate moiety from enoylpyruvoyl-2-diphospho-5'-guanosine (EPPG) to 7,8-didemethyl-8-hydroxy-5-deazariboflavin (FO) with the formation of dehydro coenzyme F420-0 and GMP. This is Phosphoenolpyruvate transferase from Streptomyces avermitilis (strain ATCC 31267 / DSM 46492 / JCM 5070 / NBRC 14893 / NCIMB 12804 / NRRL 8165 / MA-4680).